The chain runs to 110 residues: Iron-sulfur cluster assembly protein CyaY (110 aa).

This sequence belongs to the frataxin family.

Involved in iron-sulfur (Fe-S) cluster assembly. May act as a regulator of Fe-S biogenesis. The sequence is that of Iron-sulfur cluster assembly protein CyaY from Azotobacter vinelandii (strain DJ / ATCC BAA-1303).